The following is a 447-amino-acid chain: Adenylosuccinate synthetase (447 aa).

GTP contacts are provided by residues 35–41 (GDEGKGK) and 63–65 (GHT). Catalysis depends on Asp-36, which acts as the Proton acceptor. Positions 36 and 63 each coordinate Mg(2+). IMP is bound by residues 36-39 (DEGK), 61-64 (NAGH), Thr-153, Arg-167, Asn-245, Thr-260, and Arg-324. Catalysis depends on His-64, which acts as the Proton donor. 320 to 326 (VTTKRKR) is a substrate binding site. GTP is bound by residues Arg-326, 352-354 (KLD), and 435-437 (GVG).

The protein belongs to the adenylosuccinate synthetase family. Homodimer. Mg(2+) is required as a cofactor.

The protein resides in the cytoplasm. The enzyme catalyses IMP + L-aspartate + GTP = N(6)-(1,2-dicarboxyethyl)-AMP + GDP + phosphate + 2 H(+). It participates in purine metabolism; AMP biosynthesis via de novo pathway; AMP from IMP: step 1/2. Plays an important role in the de novo pathway and in the salvage pathway of purine nucleotide biosynthesis. Catalyzes the first committed step in the biosynthesis of AMP from IMP. Plays a role in the regulation of adult life span. In Drosophila melanogaster (Fruit fly), this protein is Adenylosuccinate synthetase.